We begin with the raw amino-acid sequence, 160 residues long: MSSKISSSRCCTLFCHVNTRIALTILDILIGFSNILSYAIQFHNWSALTLTAMVTLVACHTLQMFLAEKKNTITHWKYSTFKWIMWIDITLGFLALGCFVVCFIIAGVTEIEFTNLYGENLWFTGLWATAITKYTWQNALLARNYSNQKRILKSEIVEDA.

The chain crosses the membrane as a helical span at residues 21–41; it reads IALTILDILIGFSNILSYAIQ. Residue asparagine 44 is glycosylated (N-linked (GlcNAc...) asparagine). 3 helical membrane passes run 47-67, 89-109, and 123-142; these read ALTLTAMVTLVACHTLQMFLA, ITLGFLALGCFVVCFIIAGVT, and FTGLWATAITKYTWQNALLA. Asparagine 144 carries an N-linked (GlcNAc...) asparagine glycan.

It belongs to the HRG family.

The protein resides in the membrane. In terms of biological role, heme transporter. In Caenorhabditis elegans, this protein is Heme transporter hrg-5 (hrg-5).